The sequence spans 1709 residues: Hybrid signal transduction histidine kinase L (1709 aa).

4 disordered regions span residues 52–192 (SNNN…SPPH), 206–276 (FFSG…NSSD), 413–535 (TSNS…NNSC), and 554–615 (QQQQ…IFNN). Residues 53 to 87 (NNNNNNNNNNNNNNNNNNNNNNNNNNNNNNNNNNN) show a composition bias toward low complexity. The span at 88 to 100 (NEEKSNNETEKTL) shows a compositional bias: basic and acidic residues. Residues 106–148 (TTTTTTTNNNNNNNNNNNNNNNNNNNNNNNNNNNNNNNNNNTN) show a composition bias toward low complexity. A compositionally biased stretch (polar residues) spans 149-170 (SSNDIYMNSPSSTLSSPGNAGN). 3 stretches are compositionally biased toward low complexity: residues 413 to 466 (TSNS…TPNS), 486 to 535 (NNSP…NNSC), and 554 to 576 (QQQQQQQSQPTTPTQSTQSPTTS). The segment covering 585 to 610 (LTINTSFKTSPMSSPKSFNKPSQSPQ) has biased composition (polar residues). Positions 700-771 (ATRKMVTCIE…ATLTDKKTWN (72 aa)) constitute a PAS domain. A PAC domain is found at 770–822 (WNGFIRTRHNNNTLIYFEASISPVLDQFQQILYYNCTKRDVTQKRIDEESKTL). The Histidine kinase domain maps to 837 to 1059 (MMSHDIRTPM…TFTCILKFKK (223 aa)). His840 bears the Phosphohistidine; by autocatalysis mark. Disordered regions lie at residues 1068-1112 (LLPA…HQQH) and 1137-1298 (QHQL…PTSP). 3 stretches are compositionally biased toward low complexity: residues 1075 to 1112 (LQQQQQQQQHQQQTQFHQHQQQTQFHQHQQQQLQHQQH), 1137 to 1153 (QHQLQQRQHHQQQLQQQ), and 1176 to 1194 (NQHIQQQQQQQQQQQQQQQ). A compositionally biased stretch (basic residues) spans 1204–1221 (HNSHGHNHHGSHHNHNHQ). 2 stretches are compositionally biased toward polar residues: residues 1244 to 1257 (NEQQLESITENSFS) and 1275 to 1298 (NISQSPSPQSIHNGTTINQQPTSP). Response regulatory domains are found at residues 1312–1492 (KMLF…MMYL) and 1570–1692 (KVLV…KKYG). At Asp1366 the chain carries 4-aspartylphosphate. Composition is skewed to low complexity over residues 1390 to 1412 (QHLQQQQEQEQQQQQEQQQSELQ) and 1420 to 1440 (KNSSQNNDNNNNNNKSNSSGG). Residues 1390–1440 (QHLQQQQEQEQQQQQEQQQSELQKQPDVENKNSSQNNDNNNNNNKSNSSGG) are disordered. Residue Asp1622 is modified to 4-aspartylphosphate.

Activation probably requires transfer of a phosphate group between a histidine in the kinase core (transmitter) domain and an aspartate of the receiver domain.

The catalysed reaction is ATP + protein L-histidine = ADP + protein N-phospho-L-histidine.. In terms of biological role, acts as a receptor histidine kinase for a signal transduction pathway. This protein undergoes an ATP-dependent autophosphorylation at a conserved histidine residue in the kinase core, and a phosphoryl group is then transferred to a conserved aspartate residue in the receiver domain. This Dictyostelium discoideum (Social amoeba) protein is Hybrid signal transduction histidine kinase L (dhkL).